We begin with the raw amino-acid sequence, 65 residues long: Large ribosomal subunit protein uL29 (65 aa).

The protein belongs to the universal ribosomal protein uL29 family.

The chain is Large ribosomal subunit protein uL29 (rpmC) from Borreliella burgdorferi (strain ATCC 35210 / DSM 4680 / CIP 102532 / B31) (Borrelia burgdorferi).